Consider the following 367-residue polypeptide: MAFKLWLLDEETIYEHVFERYTQLEGQSGKLAQDLGIQDRRGGVLEITFEPSGLEGGRKKKRVRRRNKASSVEEDQNVAVDSYHVSVGQSISSLHSSRDNGNSTTGYVLWSTTPFFINWLLYSTSAAPFRLGSQVEVTCGSSCEGHMLELPRLIDLTGADRGKRGILELGAGISGILPVILGNFVDTYVSTDQKGILNKLKDNIMENLSQLTRKRCISRSLRLELPTVEPVGDADITAASLPSKSTLHLEVAALDWEKINLQDKKTHSLHPELSLIGETCSSVYVIAMDVIYNEYLIDPFLKTLKQLKHWLQTTYNLQFHVLVGIHLRSQEVTTLFLEKAIIEYDLTVYDIVDQVIQESRFNFYLIT.

Positions 55–74 (EGGRKKKRVRRRNKASSVEE) are disordered. The segment covering 58-68 (RKKKRVRRRNK) has biased composition (basic residues). Residues Trp-110, 170–172 (GAG), Asp-192, Trp-256, and Met-288 each bind S-adenosyl-L-methionine.

The protein belongs to the class I-like SAM-binding methyltransferase superfamily. RKM5 family.

Functionally, S-adenosyl-L-methionine-dependent protein-lysine N-methyltransferase that monomethylates 60S ribosomal protein L1 (RPL1A and RPL1B) at 'Lys-46'. This is Ribosomal lysine N-methyltransferase 5 (RKM5) from Saccharomyces cerevisiae (strain AWRI796) (Baker's yeast).